The following is a 177-amino-acid chain: MSRVAKNPVTVPAGVEVKFGTEALVIKGKNGELSFPLHSDVAIEFNDGKLAFVANNSSKQANAMSGTARALVSNMVKGVSEGFEKRLQLIGVGYRAQAQGKILNLSLGFSHPIVYEMPEGVSVQTPSQTEIVLTGSDKQVVGQVAAEIRAFRAPEPYKGKGVRYVGEVVVMKEAKKK.

Belongs to the universal ribosomal protein uL6 family. In terms of assembly, part of the 50S ribosomal subunit.

Its function is as follows. This protein binds to the 23S rRNA, and is important in its secondary structure. It is located near the subunit interface in the base of the L7/L12 stalk, and near the tRNA binding site of the peptidyltransferase center. The chain is Large ribosomal subunit protein uL6 from Neisseria meningitidis serogroup C (strain 053442).